The primary structure comprises 177 residues: Ribosome maturation factor RimM (177 aa).

The PRC barrel domain occupies 98–171; sequence GETIFLSEIK…AVVMDLPEGL (74 aa).

The protein belongs to the RimM family. In terms of assembly, binds ribosomal protein uS19.

Its subcellular location is the cytoplasm. In terms of biological role, an accessory protein needed during the final step in the assembly of 30S ribosomal subunit, possibly for assembly of the head region. Essential for efficient processing of 16S rRNA. May be needed both before and after RbfA during the maturation of 16S rRNA. It has affinity for free ribosomal 30S subunits but not for 70S ribosomes. In Bdellovibrio bacteriovorus (strain ATCC 15356 / DSM 50701 / NCIMB 9529 / HD100), this protein is Ribosome maturation factor RimM.